A 196-amino-acid chain; its full sequence is Aequorin-1 (196 aa).

Positions 1–7 (MTSEQYS) are excised as a propeptide. EF-hand domains lie at 18-53 (KWIG…IVIN), 54-108 (NLGA…SKNQ), 111-146 (LIRL…DGII), and 147-182 (QSSE…FWYT). 5 residues coordinate Ca(2+): Asp-31, Asn-33, Asn-35, Arg-37, and Glu-42. 3 may interact with the chromophore regions span residues 47 to 57 (ASDIVINNLGA), 62 to 72 (AKRHKDAVEAF), and 107 to 117 (NQITLIRLWGD). 9 residues coordinate Ca(2+): Asp-124, Asp-126, Asn-128, Glu-135, Asp-160, Asp-162, Ser-164, Gln-166, and Glu-171.

This sequence belongs to the aequorin family. In terms of processing, the reduction of the disulfide bond is necessary to regenerate aequorin from apoaequorin.

Ca(2+)-dependent bioluminescence photoprotein. Displays an emission peak at 470 nm (blue light). Trace amounts of calcium ion trigger the intramolecular oxidation of the chromophore, coelenterazine into coelenteramide and CO(2) with the concomitant emission of light. The chain is Aequorin-1 from Aequorea victoria (Water jellyfish).